The sequence spans 562 residues: Dihydroxy-acid dehydratase (562 aa).

Cys-51 contacts [2Fe-2S] cluster. Residue Asp-83 coordinates Mg(2+). Cys-124 lines the [2Fe-2S] cluster pocket. Mg(2+) contacts are provided by Asp-125 and Lys-126. Lys-126 is modified (N6-carboxylysine). Residue Cys-196 coordinates [2Fe-2S] cluster. Position 448 (Glu-448) interacts with Mg(2+). Catalysis depends on Ser-474, which acts as the Proton acceptor.

The protein belongs to the IlvD/Edd family. In terms of assembly, homodimer. It depends on [2Fe-2S] cluster as a cofactor. The cofactor is Mg(2+).

The enzyme catalyses (2R)-2,3-dihydroxy-3-methylbutanoate = 3-methyl-2-oxobutanoate + H2O. It catalyses the reaction (2R,3R)-2,3-dihydroxy-3-methylpentanoate = (S)-3-methyl-2-oxopentanoate + H2O. The protein operates within amino-acid biosynthesis; L-isoleucine biosynthesis; L-isoleucine from 2-oxobutanoate: step 3/4. It participates in amino-acid biosynthesis; L-valine biosynthesis; L-valine from pyruvate: step 3/4. Functions in the biosynthesis of branched-chain amino acids. Catalyzes the dehydration of (2R,3R)-2,3-dihydroxy-3-methylpentanoate (2,3-dihydroxy-3-methylvalerate) into 2-oxo-3-methylpentanoate (2-oxo-3-methylvalerate) and of (2R)-2,3-dihydroxy-3-methylbutanoate (2,3-dihydroxyisovalerate) into 2-oxo-3-methylbutanoate (2-oxoisovalerate), the penultimate precursor to L-isoleucine and L-valine, respectively. In Pyrobaculum aerophilum (strain ATCC 51768 / DSM 7523 / JCM 9630 / CIP 104966 / NBRC 100827 / IM2), this protein is Dihydroxy-acid dehydratase.